The following is a 140-amino-acid chain: ATP synthase epsilon chain (140 aa).

This sequence belongs to the ATPase epsilon chain family. As to quaternary structure, F-type ATPases have 2 components, CF(1) - the catalytic core - and CF(0) - the membrane proton channel. CF(1) has five subunits: alpha(3), beta(3), gamma(1), delta(1), epsilon(1). CF(0) has three main subunits: a, b and c.

The protein localises to the cell inner membrane. Produces ATP from ADP in the presence of a proton gradient across the membrane. The chain is ATP synthase epsilon chain from Xanthomonas oryzae pv. oryzae (strain MAFF 311018).